A 220-amino-acid chain; its full sequence is NADH-quinone oxidoreductase subunit B (220 aa).

[4Fe-4S] cluster-binding residues include C37, C38, C103, and C132. The interval 174–220 (PSSERYAPKNRSQRKLAERQQAAQRREMGAEKPLGALEERAELNAGR) is disordered. The span at 210–220 (LEERAELNAGR) shows a compositional bias: basic and acidic residues.

The protein belongs to the complex I 20 kDa subunit family. In terms of assembly, NDH-1 is composed of 14 different subunits. Subunits NuoB, C, D, E, F, and G constitute the peripheral sector of the complex. [4Fe-4S] cluster is required as a cofactor.

It localises to the cell membrane. The catalysed reaction is a quinone + NADH + 5 H(+)(in) = a quinol + NAD(+) + 4 H(+)(out). NDH-1 shuttles electrons from NADH, via FMN and iron-sulfur (Fe-S) centers, to quinones in the respiratory chain. The immediate electron acceptor for the enzyme in this species is believed to be a menaquinone. Couples the redox reaction to proton translocation (for every two electrons transferred, four hydrogen ions are translocated across the cytoplasmic membrane), and thus conserves the redox energy in a proton gradient. This is NADH-quinone oxidoreductase subunit B from Saccharopolyspora erythraea (strain ATCC 11635 / DSM 40517 / JCM 4748 / NBRC 13426 / NCIMB 8594 / NRRL 2338).